The sequence spans 372 residues: Hydrogenase-1 small chain (372 aa).

Positions 1–45 (MNNEETFYQAMRRQGVTRRSFLKYCSLAATSLGLGAGMAPKIAWA) form a signal peptide, tat-type signal. Over 46-326 (LENKPRIPVV…QMGTHSTADT (281 aa)) the chain is Periplasmic. [4Fe-4S] cluster contacts are provided by Cys-62, Cys-65, Cys-160, Cys-194, His-232, Cys-235, Cys-260, and Cys-266. The [3Fe-4S] cluster site is built by Cys-275, Cys-294, and Cys-297. Residues 327–347 (VGLTALGVVAAAVGVHAVASA) traverse the membrane as a helical segment. The interval 347–372 (AVDQRRRHNQQPTETEHQPGNEDKQA) is disordered. The Cytoplasmic segment spans residues 348–372 (VDQRRRHNQQPTETEHQPGNEDKQA). Positions 360 to 372 (ETEHQPGNEDKQA) are enriched in basic and acidic residues.

Belongs to the [NiFe]/[NiFeSe] hydrogenase small subunit family. Heterodimer of a large and a small subunit. The cofactor is [4Fe-4S] cluster. [3Fe-4S] cluster serves as cofactor. Predicted to be exported by the Tat system. The position of the signal peptide cleavage has not been experimentally proven.

It is found in the cell inner membrane. It catalyses the reaction H2 + A = AH2. Its function is as follows. This is one of three E.coli hydrogenases synthesized in response to different physiological conditions. HYD1 is believed to have a role in hydrogen cycling during fermentative growth. The polypeptide is Hydrogenase-1 small chain (hyaA) (Escherichia coli O6:H1 (strain CFT073 / ATCC 700928 / UPEC)).